A 129-amino-acid polypeptide reads, in one-letter code: Large ribosomal subunit protein uL22 (129 aa).

It belongs to the universal ribosomal protein uL22 family. As to quaternary structure, part of the 50S ribosomal subunit.

In terms of biological role, this protein binds specifically to 23S rRNA; its binding is stimulated by other ribosomal proteins, e.g. L4, L17, and L20. It is important during the early stages of 50S assembly. It makes multiple contacts with different domains of the 23S rRNA in the assembled 50S subunit and ribosome. Its function is as follows. The globular domain of the protein is located near the polypeptide exit tunnel on the outside of the subunit, while an extended beta-hairpin is found that lines the wall of the exit tunnel in the center of the 70S ribosome. In Metamycoplasma hominis (strain ATCC 23114 / DSM 25592 / NBRC 14850 / NCTC 10111 / PG21) (Mycoplasma hominis), this protein is Large ribosomal subunit protein uL22.